The sequence spans 332 residues: GTP 3',8-cyclase (332 aa).

The region spanning 9-220 (GYNRRVDYLR…TQVRERIAER (212 aa)) is the Radical SAM core domain. Position 18 (Arg-18) interacts with GTP. The [4Fe-4S] cluster site is built by Cys-25 and Cys-29. Residue Tyr-31 participates in S-adenosyl-L-methionine binding. Cys-32 is a binding site for [4Fe-4S] cluster. A GTP-binding site is contributed by Arg-67. Gly-71 serves as a coordination point for S-adenosyl-L-methionine. Thr-98 is a GTP binding site. Residue Ser-122 coordinates S-adenosyl-L-methionine. Residue Lys-159 coordinates GTP. Met-193 lines the S-adenosyl-L-methionine pocket. The [4Fe-4S] cluster site is built by Cys-258 and Cys-261. A GTP-binding site is contributed by 263–265 (RVR). Cys-275 provides a ligand contact to [4Fe-4S] cluster.

This sequence belongs to the radical SAM superfamily. MoaA family. As to quaternary structure, monomer and homodimer. It depends on [4Fe-4S] cluster as a cofactor.

It carries out the reaction GTP + AH2 + S-adenosyl-L-methionine = (8S)-3',8-cyclo-7,8-dihydroguanosine 5'-triphosphate + 5'-deoxyadenosine + L-methionine + A + H(+). Its pathway is cofactor biosynthesis; molybdopterin biosynthesis. Catalyzes the cyclization of GTP to (8S)-3',8-cyclo-7,8-dihydroguanosine 5'-triphosphate. In Pseudomonas fluorescens (strain Pf0-1), this protein is GTP 3',8-cyclase.